Consider the following 194-residue polypeptide: MIGLRPAFSTMLFLLLLTGGVYPLLTTALGQWWFPWQANGSLIHKDNVIRGSALIGQSFTAAGYFHGRPSATADTPYNPLASGGSNLAASNPELDAQIQSRVAALRAANPQASSAVPVELATASASGLDNNLTPGAAAWQIPRVAAARQLPVEQVAQLVAEYTHRPLARFLGQPVVNIVELNLALDALQGHRAK.

Residues leucine 12–phenylalanine 34 traverse the membrane as a helical segment.

It belongs to the KdpC family. In terms of assembly, the system is composed of three essential subunits: KdpA, KdpB and KdpC.

The protein localises to the cell inner membrane. In terms of biological role, part of the high-affinity ATP-driven potassium transport (or Kdp) system, which catalyzes the hydrolysis of ATP coupled with the electrogenic transport of potassium into the cytoplasm. This subunit acts as a catalytic chaperone that increases the ATP-binding affinity of the ATP-hydrolyzing subunit KdpB by the formation of a transient KdpB/KdpC/ATP ternary complex. The sequence is that of Potassium-transporting ATPase KdpC subunit from Salmonella enteritidis PT4 (strain P125109).